The sequence spans 465 residues: Argininosuccinate lyase (465 aa).

The protein belongs to the lyase 1 family. Argininosuccinate lyase subfamily.

Its subcellular location is the cytoplasm. The enzyme catalyses 2-(N(omega)-L-arginino)succinate = fumarate + L-arginine. The protein operates within amino-acid biosynthesis; L-arginine biosynthesis; L-arginine from L-ornithine and carbamoyl phosphate: step 3/3. This Desulfatibacillum aliphaticivorans protein is Argininosuccinate lyase.